The sequence spans 37 residues: 24 kDa antigen (37 aa).

The chain is 24 kDa antigen from Plasmodium chabaudi.